The chain runs to 305 residues: GPI-anchored hemophore cfmA (305 aa).

The signal sequence occupies residues Met-1 to Ala-18. Positions Ala-19–Ser-111 constitute a CFEM domain. Disulfide bonds link Cys-25-Cys-68, Cys-29-Cys-63, Cys-42-Cys-49, and Cys-51-Cys-84. Asp-46 lines the heme pocket. Residues Thr-92–Ala-287 form a disordered region. Residues Gly-95–Ser-149 are compositionally biased toward gly residues. 3 stretches are compositionally biased toward low complexity: residues Gly-150 to Thr-186, Gly-196 to Gly-259, and Gly-267 to Ala-287. N-linked (GlcNAc...) asparagine glycans are attached at residues Asn-183, Asn-203, Asn-237, Asn-243, and Asn-275. Ser-276 carries the GPI-like-anchor amidated serine lipid modification. The propeptide at Ser-277 to Leu-305 is removed in mature form.

It belongs to the RBT5 family. In terms of processing, the GPI-like anchor contains a phosphoceramide lipid group. Post-translationally, the GPI-anchor is attached to the protein in the endoplasmic reticulum and serves to target the protein to the cell surface. There, the glucosamine-inositol phospholipid moiety is cleaved off and the GPI-modified mannoprotein is covalently attached via its lipidless GPI glycan remnant to the 1,6-beta-glucan of the outer cell wall layer.

The protein resides in the secreted. The protein localises to the cell wall. It is found in the cell membrane. In terms of biological role, GPI-anchored cell wall protein involved in stabilizing the cell wall. Not implicated in virulence, heme uptake and biofilm formation. This is GPI-anchored hemophore cfmA from Aspergillus fumigatus (strain ATCC MYA-4609 / CBS 101355 / FGSC A1100 / Af293) (Neosartorya fumigata).